The sequence spans 357 residues: Peptide chain release factor 1 (357 aa).

Gln234 is subject to N5-methylglutamine. The tract at residues 284–304 (RIEGERSEDRKSKIGTGDRSE) is disordered.

Belongs to the prokaryotic/mitochondrial release factor family. In terms of processing, methylated by PrmC. Methylation increases the termination efficiency of RF1.

It localises to the cytoplasm. In terms of biological role, peptide chain release factor 1 directs the termination of translation in response to the peptide chain termination codons UAG and UAA. The chain is Peptide chain release factor 1 from Pelagibacter ubique (strain HTCC1062).